Reading from the N-terminus, the 330-residue chain is Zinc finger protein Gfi-1b (330 aa).

Residues 1 to 20 form an SNAG domain region; the sequence is MPRSFLVKSKKAHTYHQPRV. The disordered stretch occupies residues 1-42; sequence MPRSFLVKSKKAHTYHQPRVQEDEPLWPPALTPVPRDQAPSN. An N6,N6-dimethyllysine modification is found at Lys8. The interaction with ARIH2 stretch occupies residues 91 to 330; the sequence is GDSPLSDSPP…RHRESQHNLK (240 aa). C2H2-type zinc fingers lie at residues 163–186, 192–214, 220–242, 248–270, 276–298, and 304–327; these read YHCV…RRSH, FACD…THVH, FECR…LLIH, YPCQ…TYIH, HKCQ…SRKH, and FSCE…ESQH. Residues 164-330 form a mediates interaction with GATA1 region; sequence HCVKCNKVFS…RHRESQHNLK (167 aa).

In terms of assembly, component of a RCOR-GFI-KDM1A-HDAC complex. Interacts directly with RCOR1, KDM1A and HDAC2. Forms a complex with GATA1. Interacts with histone methyltransferases EHMT2 and SUV39H1. Interacts with ARIH2 (via RING-type 2). Interacts with RUNX1T1. Post-translationally, methylation at Lys-8 in the SNAG domain seems required for the recruitment of the corepressor complex. As to expression, expressed in bone marrow and fetal liver, but also detectable in fetal spleen, fetal thymus, and testes. Detected in hematopoietic stem cells, erythroblasts, and megakaryocytes. Overexpressed in bone marrow of patients with erythroleukemia and megakaryocytic leukemia as well as in their corresponding leukemic cell lines, and markedly repressed in severe aplastic anemia (SAA).

It is found in the nucleus. Functionally, essential proto-oncogenic transcriptional regulator necessary for development and differentiation of erythroid and megakaryocytic lineages. Component of a RCOR-GFI-KDM1A-HDAC complex that suppresses, via histone deacetylase (HDAC) recruitment, a number of genes implicated in multilineage blood cell development and controls hematopoietic differentiation. Transcriptional repressor or activator depending on both promoter and cell type context; represses promoter activity of SOCS1 and SOCS3 and thus, may regulate cytokine signaling pathways. Cooperates with GATA1 to repress target gene transcription, such as the apoptosis regulator BCL2L1; GFI1B silencing in leukemic cell lines markedly increase apoptosis rate. Inhibits down-regulation of MYC and MYB as well as the cyclin-dependent kinase inhibitor CDKN1A/P21WAF1 in IL6-treated myelomonocytic cells. Represses expression of GATA3 in T-cell lymphomas and inhibits GATA1-mediated transcription; as GATA1 also mediates erythroid GFI1B transcription, both GATA1 and GFI1B participate in a feedback regulatory pathway controlling the expression of GFI1B gene in erythroid cells. Suppresses GATA1-mediated stimulation of GFI1B promoter through protein interaction. Binds to gamma-satellite DNA and to its own promoter, auto-repressing its own expression. Alters histone methylation by recruiting histone methyltransferase to target genes promoters. Plays a role in heterochromatin formation. The polypeptide is Zinc finger protein Gfi-1b (GFI1B) (Homo sapiens (Human)).